The following is a 122-amino-acid chain: Basic phospholipase A2 homolog ecarpholin S (122 aa).

7 disulfide bridges follow: C26-C115, C28-C44, C43-C95, C49-C122, C50-C88, C57-C81, and C75-C86. The important for membrane-damaging activities in eukaryotes and bacteria; heparin-binding stretch occupies residues 105–117 (KKYTYYPNFWCKG).

Expressed by the venom gland.

It is found in the secreted. With respect to regulation, suramin inhibits the myotoxic activity. Snake venom phospholipase A2 homolog that lacks enzymatic activity. Shows high myotoxin activities and displays edema-inducing activities. In Echis carinatus (Saw-scaled viper), this protein is Basic phospholipase A2 homolog ecarpholin S.